A 485-amino-acid polypeptide reads, in one-letter code: Ribosomal protein S6 kinase beta-2 (485 aa).

The segment at 1–26 is disordered; the sequence is MAAVFDLDLETEEGSEGEGEPEFSPA. Positions 7 to 21 are enriched in acidic residues; sequence LDLETEEGSEGEGEP. Position 15 is a phosphoserine (Ser15). One can recognise a Protein kinase domain in the interval 67–328; that stretch reads FELLSVLGKG…AADVQRHPFF (262 aa). Residues 73–81 and Lys99 contribute to the ATP site; that span reads LGKGGYGKV. Residue Asp194 is the Proton acceptor of the active site. Residues 329-399 form the AGC-kinase C-terminal domain; it reads RHINWDDLLA…VAPSVLDSIK (71 aa). The tract at residues 407 to 485 is disordered; the sequence is KLRSPRRLNS…SKKGRGRSGR (79 aa). Ser417 is subject to Phosphoserine. At Thr420 the chain carries Phosphothreonine. Phosphoserine is present on Ser423. A compositionally biased stretch (pro residues) spans 436–469; it reads SPGPPEPMEPSLPPLLPSPPSPPPTSTAPLPIRP. A Nuclear localization signal motif is present at residues 474–480; it reads KKSKKGR. The span at 474-485 shows a compositional bias: basic residues; the sequence is KKSKKGRGRSGR. Phosphoserine; by PKC is present on Ser476.

Belongs to the protein kinase superfamily. AGC Ser/Thr protein kinase family. S6 kinase subfamily. Phosphorylated and activated by MTOR. Phosphorylation by PKC within the NLS in response to mitogenic stimuli causes cytoplasmic retention.

The protein localises to the cytoplasm. Its subcellular location is the nucleus. It catalyses the reaction L-seryl-[protein] + ATP = O-phospho-L-seryl-[protein] + ADP + H(+). The enzyme catalyses L-threonyl-[protein] + ATP = O-phospho-L-threonyl-[protein] + ADP + H(+). In terms of biological role, phosphorylates specifically ribosomal protein S6. Seems to act downstream of mTOR signaling in response to growth factors and nutrients to promote cell proliferation, cell growth and cell cycle progression in an alternative pathway regulated by MEAK7. The protein is Ribosomal protein S6 kinase beta-2 (Rps6kb2) of Mus musculus (Mouse).